Consider the following 197-residue polypeptide: Probable nicotinate-nucleotide adenylyltransferase (197 aa).

Belongs to the NadD family.

It carries out the reaction nicotinate beta-D-ribonucleotide + ATP + H(+) = deamido-NAD(+) + diphosphate. Its pathway is cofactor biosynthesis; NAD(+) biosynthesis; deamido-NAD(+) from nicotinate D-ribonucleotide: step 1/1. In terms of biological role, catalyzes the reversible adenylation of nicotinate mononucleotide (NaMN) to nicotinic acid adenine dinucleotide (NaAD). This is Probable nicotinate-nucleotide adenylyltransferase from Leptospira borgpetersenii serovar Hardjo-bovis (strain JB197).